We begin with the raw amino-acid sequence, 502 residues long: ATP synthase subunit alpha (502 aa).

A disordered region spans residues Pro114 to Arg139. Gly169–Thr176 contributes to the ATP binding site.

Belongs to the ATPase alpha/beta chains family. In terms of assembly, F-type ATPases have 2 components, CF(1) - the catalytic core - and CF(0) - the membrane proton channel. CF(1) has five subunits: alpha(3), beta(3), gamma(1), delta(1), epsilon(1). CF(0) has three main subunits: a(1), b(2) and c(9-12). The alpha and beta chains form an alternating ring which encloses part of the gamma chain. CF(1) is attached to CF(0) by a central stalk formed by the gamma and epsilon chains, while a peripheral stalk is formed by the delta and b chains.

The protein localises to the cell membrane. The enzyme catalyses ATP + H2O + 4 H(+)(in) = ADP + phosphate + 5 H(+)(out). In terms of biological role, produces ATP from ADP in the presence of a proton gradient across the membrane. The alpha chain is a regulatory subunit. The sequence is that of ATP synthase subunit alpha from Halalkalibacterium halodurans (strain ATCC BAA-125 / DSM 18197 / FERM 7344 / JCM 9153 / C-125) (Bacillus halodurans).